We begin with the raw amino-acid sequence, 115 residues long: Large ribosomal subunit protein bL20 (115 aa).

Belongs to the bacterial ribosomal protein bL20 family.

Functionally, binds directly to 23S ribosomal RNA and is necessary for the in vitro assembly process of the 50S ribosomal subunit. It is not involved in the protein synthesizing functions of that subunit. This is Large ribosomal subunit protein bL20 from Salinibacter ruber (strain DSM 13855 / M31).